A 58-amino-acid chain; its full sequence is MNNKKNIFDIVMYIIFGVLSLFLVAKTDYGTGVLVFVAILYLAVIAYKIKQVFSNSDS.

2 consecutive transmembrane segments (helical) span residues isoleucine 7–threonine 27 and tyrosine 29–isoleucine 49.

It is found in the cell membrane. This is an uncharacterized protein from Bacillus subtilis (strain 168).